The following is a 474-amino-acid chain: Chromosomal replication initiator protein DnaA (474 aa).

Residues 1–73 (MTNIEQERWS…LSCWQAEMPE (73 aa)) form a domain I, interacts with DnaA modulators region. A domain II region spans residues 73–130 (EVHRIDLTVRTAMRCAAPAKEQAAPIEPRREDNRAAAHDLRVSATAPVSANHEALGGS). Residues 131 to 353 (PLDPRLTFSS…GAINRLLAHS (223 aa)) are domain III, AAA+ region. The ATP site is built by Gly178, Gly180, Lys181, and Thr182. Positions 354–474 (KLNAQPVTLE…VESLKRQLQE (121 aa)) are domain IV, binds dsDNA.

The protein belongs to the DnaA family. Oligomerizes as a right-handed, spiral filament on DNA at oriC.

It localises to the cytoplasm. Plays an essential role in the initiation and regulation of chromosomal replication. ATP-DnaA binds to the origin of replication (oriC) to initiate formation of the DNA replication initiation complex once per cell cycle. Binds the DnaA box (a 9 base pair repeat at the origin) and separates the double-stranded (ds)DNA. Forms a right-handed helical filament on oriC DNA; dsDNA binds to the exterior of the filament while single-stranded (ss)DNA is stabiized in the filament's interior. The ATP-DnaA-oriC complex binds and stabilizes one strand of the AT-rich DNA unwinding element (DUE), permitting loading of DNA polymerase. After initiation quickly degrades to an ADP-DnaA complex that is not apt for DNA replication. Binds acidic phospholipids. The polypeptide is Chromosomal replication initiator protein DnaA (Rhodopseudomonas palustris (strain BisA53)).